Here is a 749-residue protein sequence, read N- to C-terminus: MSFIDPYQHIIVEHQYSHKFTVVVLRATKVTKGAFGDMLDTPDPYVELFISSTPDSRKRTRHFNNNINPVWNETFEFILDPNQENVLEITLMDANYVMDETLGTATFTLSSMKVGEKKEVPFIFNQVTEMILEMSLEVCSCPDLRFSMALCDQEKTFRQQRKENIKENMKKLLGPKKSEGLYSTRDVPVVAILGSGGGFRAMVGFSGVMKALYESGILDCATYLAGLSGSSWYMSTLYSHPDFPEKGPEEINKELMKNVSYDPLLLLTPQKIKRYVESLWKKKSSGQPVTFTDIFGMLIGETLIHNRMNTTLSSLKEKVNTAQCPLPLFTCLHVKPDVSELMFADWVEFSPYEIGMAKYGTFMAPDLFGSKFFMGTVVKKYEENPLHFLMGVWGSAFSILFNRVLGVSGSQNKGSTMEEELENITAKHIVSNDSSDSDDESQEPKGTENEDAERDYQNDNQASWVHRMLMALVSDSALFNTREGRAGKVHNFMLGLNLNTSYPLSPLRNFTTQESLDDDELDAAVADPDEFERIYEPLDVKSKKIHVVDSGLTFNLPYPLILRPQRGVDLIISFDFSARPSDSSPPFKELLLAEKWAKMNKLPFPKIDPYVFDREGLKECYVFKPKNPDVEKDCPTIIHFVLANINFRKYKAPGVPRETKEEKEIADFDIFDDPESPFSTFNFQYPNQAFKRLHDLMHFNTLNNIDVIKNAMVESIEYRRQNPSRCSVSLSNVEARRFFNKEFLNKPTA.

The phospholipid binding stretch occupies residues 1–178; that stretch reads MSFIDPYQHI…MKKLLGPKKS (178 aa). A Phosphoserine modification is found at S2. The C2 domain maps to 6–122; sequence PYQHIIVEHQ…KVGEKKEVPF (117 aa). Residues D40, T41, D43, N65, D93, A94, and N95 each coordinate Ca(2+). The PLA2c domain maps to 140-740; sequence SCPDLRFSMA…SNVEARRFFN (601 aa). Catalysis depends on S228, which acts as the Nucleophile. Phosphothreonine is present on T268. Residues 427-456 form a disordered region; it reads KHIVSNDSSDSDDESQEPKGTENEDAERDY. S434, S435, and S437 each carry phosphoserine. S505 bears the Phosphoserine; by MAPK mark. S515 bears the Phosphoserine mark. K541 is covalently cross-linked (Glycyl lysine isopeptide (Lys-Gly) (interchain with G-Cter in SUMO2)). The Proton acceptor role is filled by D549. K606 participates in a covalent cross-link: Glycyl lysine isopeptide (Lys-Gly) (interchain with G-Cter in SUMO2). A phosphoserine mark is found at S727 and S729.

Interacts with KAT5. Phosphorylated at both Ser-505 and Ser-727 in response to mitogenic stimuli.

It is found in the cytoplasm. It localises to the golgi apparatus membrane. The protein resides in the nucleus envelope. The catalysed reaction is a 1,2-diacyl-sn-glycero-3-phosphocholine + H2O = a 1-acyl-sn-glycero-3-phosphocholine + a fatty acid + H(+). It catalyses the reaction a 1-O-alkyl-2-acyl-sn-glycero-3-phosphocholine + H2O = a 1-O-alkyl-sn-glycero-3-phosphocholine + a fatty acid + H(+). It carries out the reaction a 1-acyl-sn-glycero-3-phosphocholine + H2O = sn-glycerol 3-phosphocholine + a fatty acid + H(+). The enzyme catalyses 1-hexadecanoyl-2-(5Z,8Z,11Z,14Z-eicosatetraenoyl)-sn-glycero-3-phosphocholine + H2O = 1-hexadecanoyl-sn-glycero-3-phosphocholine + (5Z,8Z,11Z,14Z)-eicosatetraenoate + H(+). The catalysed reaction is 1,2-di-(5Z,8Z,11Z,14Z-eicosatetraenoyl)-sn-glycero-3-phosphocholine + H2O = 1-(5Z,8Z,11Z,14Z-eicosatetraenoyl)-sn-glycero-3-phosphocholine + (5Z,8Z,11Z,14Z)-eicosatetraenoate + H(+). It catalyses the reaction 1-octadecanoyl-2-(5Z,8Z,11Z,14Z-eicosatetraenoyl)-sn-glycero-3-phosphocholine + H2O = 1-octadecanoyl-sn-glycero-3-phosphocholine + (5Z,8Z,11Z,14Z)-eicosatetraenoate + H(+). It carries out the reaction 1-hexadecanoyl-2-(9Z,12Z-octadecadienoyl)-sn-glycero-3-phosphocholine + H2O = (9Z,12Z)-octadecadienoate + 1-hexadecanoyl-sn-glycero-3-phosphocholine + H(+). The enzyme catalyses 1-octadecanoyl-2-(9Z,12Z,15Z-octadecatrienoyl)-sn-glycero-3-phosphocholine + H2O = (9Z,12Z,15Z)-octadecatrienoate + 1-octadecanoyl-sn-glycero-3-phosphocholine + H(+). The catalysed reaction is 1-(5Z,8Z,11Z,14Z-eicosatetraenoyl)-2-hexadecanoyl-sn-glycero-3-phosphocholine + H2O = 1-(5Z,8Z,11Z,14Z-eicosatetraenoyl)-sn-glycero-3-phosphocholine + hexadecanoate + H(+). It catalyses the reaction 1-O-hexadecyl-2-(5Z,8Z,11Z,14Z)-eicosatetraenoyl-sn-glycero-3-phosphocholine + H2O = 1-O-hexadecyl-sn-glycero-3-phosphocholine + (5Z,8Z,11Z,14Z)-eicosatetraenoate + H(+). It carries out the reaction 1,2-di-(9Z-octadecenoyl)-sn-glycero-3-phospho-(1'-sn-glycerol) + H2O = 1-(9Z-octadecenoyl)-sn-glycero-3-phospho-(1'-sn-glycerol) + (9Z)-octadecenoate + H(+). The enzyme catalyses 1-octadecanoyl-2-(5Z,8Z,11Z,14Z-eicosatetraenoyl)-sn-glycero-3-phosphate + H2O = 1-octadecanoyl-sn-glycero-3-phosphate + (5Z,8Z,11Z,14Z)-eicosatetraenoate + H(+). The catalysed reaction is 1-hexadecanoyl-sn-glycero-3-phosphocholine + H2O = sn-glycerol 3-phosphocholine + hexadecanoate + H(+). It catalyses the reaction 2-(prostaglandin E2)-sn-glycero-3-phosphoethanolamine + H2O = sn-glycero-3-phosphoethanolamine + prostaglandin E2 + H(+). It carries out the reaction 2-[(15S)-hydroxy-(5Z,8Z,11Z,13E)-eicosatetraenoyl]-sn-glycero-3-phosphocholine + H2O = (15S)-hydroxy-(5Z,8Z,11Z,13E)-eicosatetraenoate + sn-glycerol 3-phosphocholine + H(+). The enzyme catalyses 2-[(15R)-hydroxy-(5Z,8Z,11Z,13E)-eicosatetraenoyl]-sn-glycero-3-phosphocholine + H2O = (15R)-hydroxy-(5Z,8Z,11Z,13E)-eicosatetraenoate + sn-glycerol 3-phosphocholine + H(+). The catalysed reaction is 2-(prostaglandin E2)-sn-glycero-3-phosphocholine + H2O = prostaglandin E2 + sn-glycerol 3-phosphocholine + H(+). It catalyses the reaction 2-[(11R)-hydroxy-(5Z,8Z,12E,14Z)-eicosatetraenoyl]-sn-glycero-3-phosphocholine + H2O = (11R)-hydroxy-(5Z,8Z,12E,14Z)-eicosatetraenoate + sn-glycerol 3-phosphocholine + H(+). It carries out the reaction 1-(5Z,8Z,11Z,14Z-eicosatetraenoyl)-2-O-hexadecyl-sn-glycero-3-phosphocholine + H2O = 2-O-hexadecyl-sn-glycero-3-phosphocholine + (5Z,8Z,11Z,14Z)-eicosatetraenoate + H(+). The enzyme catalyses 1-octadecanoyl-2-(5Z,8Z,11Z,14Z-eicosatetraenoyl)-sn-glycero-3-phosphocholine + glycerol = 1-(5Z,8Z,11Z,14Z-eicosatetraenoyl)-glycerol + 1-octadecanoyl-sn-glycero-3-phosphocholine. The catalysed reaction is 1-octadecanoyl-2-(9Z,12Z,15Z-octadecatrienoyl)-sn-glycero-3-phosphocholine + glycerol = 1-(9Z,12Z,15Z-octadecatrienoyl)-glycerol + 1-octadecanoyl-sn-glycero-3-phosphocholine. Its pathway is membrane lipid metabolism; glycerophospholipid metabolism. The protein operates within lipid metabolism; arachidonate metabolism. It participates in lipid metabolism; prostaglandin biosynthesis. It functions in the pathway lipid metabolism; leukotriene B4 biosynthesis. With respect to regulation, activated by cytosolic calcium, which is necessary for binding to membrane lipids. Activated by phosphorylation in response to mitogenic stimuli. In terms of biological role, has primarily calcium-dependent phospholipase and lysophospholipase activities, with a major role in membrane lipid remodeling and biosynthesis of lipid mediators of the inflammatory response. Plays an important role in embryo implantation and parturition through its ability to trigger prostanoid production. Preferentially hydrolyzes the ester bond of the fatty acyl group attached at sn-2 position of phospholipids (phospholipase A2 activity). Selectively hydrolyzes sn-2 arachidonoyl group from membrane phospholipids, providing the precursor for eicosanoid biosynthesis via the cyclooxygenase pathway. In an alternative pathway of eicosanoid biosynthesis, hydrolyzes sn-2 fatty acyl chain of eicosanoid lysophopholipids to release free bioactive eicosanoids. Hydrolyzes the ester bond of the fatty acyl group attached at sn-1 position of phospholipids (phospholipase A1 activity) only if an ether linkage rather than an ester linkage is present at the sn-2 position. This hydrolysis is not stereospecific. Has calcium-independent phospholipase A2 and lysophospholipase activities in the presence of phosphoinositides. Has O-acyltransferase activity. Catalyzes the transfer of fatty acyl chains from phospholipids to a primary hydroxyl group of glycerol (sn-1 or sn-3), potentially contributing to monoacylglycerol synthesis. In Equus caballus (Horse), this protein is Cytosolic phospholipase A2 (PLA2G4A).